A 20-amino-acid polypeptide reads, in one-letter code: Beta-1,3-glucan-binding protein 2 (20 aa).

This sequence belongs to the insect beta-1,3-glucan binding protein family. Monomer.

It is found in the secreted. In terms of biological role, involved in the recognition of invading microorganisms causing their aggregation. Activates the phenoloxidase cascade. Binds specifically to beta-1,3-glucan. Binds the A.niger cell wall component alpha-1,3-glucan, a fungal pathogen-associated molecular pattern (PAMP) that activates the host immune response. This chain is Beta-1,3-glucan-binding protein 2, found in Galleria mellonella (Greater wax moth).